The primary structure comprises 100 residues: MDLSPREKDKLLIFTAGLLAERRLARGLKLNYPEAVALISAALLEGARDGRSVAELMHYGTTLLNREQVMEGVPEMIPDIQVEATFPDGTKLVTVHQPIA.

It belongs to the urease gamma subunit family. As to quaternary structure, heterotrimer of UreA (gamma), UreB (beta) and UreC (alpha) subunits. Three heterotrimers associate to form the active enzyme.

The protein resides in the cytoplasm. It catalyses the reaction urea + 2 H2O + H(+) = hydrogencarbonate + 2 NH4(+). It participates in nitrogen metabolism; urea degradation; CO(2) and NH(3) from urea (urease route): step 1/1. The protein is Urease subunit gamma of Pseudomonas aeruginosa (strain LESB58).